The chain runs to 379 residues: L-lactate dehydrogenase (379 aa).

An FMN hydroxy acid dehydrogenase domain is found at 1-379 (MIISSSTDYR…ITSELLVREP (379 aa)). Residue Tyr24 participates in substrate binding. Ser106 and Gln127 together coordinate FMN. Tyr129 lines the substrate pocket. Residue Thr155 coordinates FMN. Arg164 is a substrate binding site. Position 251 (Lys251) interacts with FMN. Residue His275 is the Proton acceptor of the active site. A substrate-binding site is contributed by Arg278. 306-330 (DSGIRSGLDVVRMIALGADAAMLGR) contributes to the FMN binding site.

This sequence belongs to the FMN-dependent alpha-hydroxy acid dehydrogenase family. It depends on FMN as a cofactor.

It is found in the cell membrane. It catalyses the reaction (S)-lactate + A = pyruvate + AH2. Its function is as follows. Catalyzes the conversion of L-lactate to pyruvate. Is coupled to the respiratory chain. The sequence is that of L-lactate dehydrogenase from Alcaligenes faecalis.